Consider the following 611-residue polypeptide: 4-hydroxy-3-methylbut-2-en-1-yl diphosphate synthase (flavodoxin) (611 aa).

4 residues coordinate [4Fe-4S] cluster: C520, C523, C554, and E561.

It belongs to the IspG family. The cofactor is [4Fe-4S] cluster.

It carries out the reaction (2E)-4-hydroxy-3-methylbut-2-enyl diphosphate + oxidized [flavodoxin] + H2O + 2 H(+) = 2-C-methyl-D-erythritol 2,4-cyclic diphosphate + reduced [flavodoxin]. The protein operates within isoprenoid biosynthesis; isopentenyl diphosphate biosynthesis via DXP pathway; isopentenyl diphosphate from 1-deoxy-D-xylulose 5-phosphate: step 5/6. Converts 2C-methyl-D-erythritol 2,4-cyclodiphosphate (ME-2,4cPP) into 1-hydroxy-2-methyl-2-(E)-butenyl 4-diphosphate. The chain is 4-hydroxy-3-methylbut-2-en-1-yl diphosphate synthase (flavodoxin) from Parabacteroides distasonis (strain ATCC 8503 / DSM 20701 / CIP 104284 / JCM 5825 / NCTC 11152).